A 498-amino-acid polypeptide reads, in one-letter code: ATP synthase subunit beta, chloroplastic (498 aa).

Thr-6 carries the phosphothreonine modification. A Phosphoserine modification is found at Ser-13. Position 172-179 (172-179) interacts with ATP; that stretch reads GGAGVGKT.

Belongs to the ATPase alpha/beta chains family. In terms of assembly, F-type ATPases have 2 components, CF(1) - the catalytic core - and CF(0) - the membrane proton channel. CF(1) has five subunits: alpha(3), beta(3), gamma(1), delta(1), epsilon(1). CF(0) has four main subunits: a(1), b(1), b'(1) and c(9-12).

It is found in the plastid. It localises to the chloroplast thylakoid membrane. It carries out the reaction ATP + H2O + 4 H(+)(in) = ADP + phosphate + 5 H(+)(out). Produces ATP from ADP in the presence of a proton gradient across the membrane. The catalytic sites are hosted primarily by the beta subunits. This chain is ATP synthase subunit beta, chloroplastic, found in Barbarea verna (Land cress).